Reading from the N-terminus, the 623-residue chain is V-type proton ATPase catalytic subunit A (623 aa).

G252 to T259 is a binding site for ATP.

Belongs to the ATPase alpha/beta chains family. V-ATPase is a heteromultimeric enzyme composed of a peripheral catalytic V1 complex (main components: subunits A, B, C, D, E, and F) attached to an integral membrane V0 proton pore complex (main component: the proteolipid protein).

The catalysed reaction is ATP + H2O + 4 H(+)(in) = ADP + phosphate + 5 H(+)(out). Its function is as follows. Catalytic subunit of the peripheral V1 complex of vacuolar ATPase. V-ATPase vacuolar ATPase is responsible for acidifying a variety of intracellular compartments in eukaryotic cells. This chain is V-type proton ATPase catalytic subunit A (CVA69.24), found in Gossypium hirsutum (Upland cotton).